The primary structure comprises 457 residues: Chromosomal replication initiator protein DnaA (457 aa).

The interval 1–75 is domain I, interacts with DnaA modulators; the sequence is MDAQLNNLWE…ALKIVTSRKF (75 aa). The segment at 75 to 118 is domain II; it reads FKIEFYLESDLEEEKENEEKQKEEKKENTNDVDGSIVVSDEMSA. A domain III, AAA+ region region spans residues 119–335; it reads TLNPKYTFQS…GALIRIIAYS (217 aa). Residues G163, G165, K166, and T167 each coordinate ATP. The segment at 336 to 457 is domain IV, binds dsDNA; that stretch reads SLTNRDVSVD…NDITKKLTQK (122 aa).

Belongs to the DnaA family. As to quaternary structure, oligomerizes as a right-handed, spiral filament on DNA at oriC.

It is found in the cytoplasm. In terms of biological role, plays an essential role in the initiation and regulation of chromosomal replication. ATP-DnaA binds to the origin of replication (oriC) to initiate formation of the DNA replication initiation complex once per cell cycle. Binds the DnaA box (a 9 base pair repeat at the origin) and separates the double-stranded (ds)DNA. Forms a right-handed helical filament on oriC DNA; dsDNA binds to the exterior of the filament while single-stranded (ss)DNA is stabiized in the filament's interior. The ATP-DnaA-oriC complex binds and stabilizes one strand of the AT-rich DNA unwinding element (DUE), permitting loading of DNA polymerase. After initiation quickly degrades to an ADP-DnaA complex that is not apt for DNA replication. Binds acidic phospholipids. The polypeptide is Chromosomal replication initiator protein DnaA (Clostridium perfringens (strain ATCC 13124 / DSM 756 / JCM 1290 / NCIMB 6125 / NCTC 8237 / Type A)).